The sequence spans 89 residues: LSM complex subunit LSM3 (89 aa).

Residues 3–82 (TPLDLLKLNL…VTLISTPSED (80 aa)) form the Sm domain.

Belongs to the snRNP Sm proteins family. In terms of assembly, component of the heptameric LSM1-LSM7 complex that forms a seven-membered ring structure with a donut shape. The LSm subunits are arranged in the order LSM1, LSM2, LSM3, LSM6, LSM5, LSM7 and LSM4. Except for LSM1, where a C-terminal helix crosses the ring structure to form additional interactions with LSM3 and LSM6, each subunit interacts only with its two neighboring subunits. The LSM1-LSM7 complex interacts with PAT1; within the complex PAT1 has direct interactions with LSM2 and LSM3. The LSM1-LSM7 complex interacts with XRN1. Component of the heptameric LSM2-LSM8 complex that forms a seven-membered ring structure with a donut shape; an RNA strand can pass through the hole in the center of the ring structure. The LSm subunits are arranged in the order LSM8, LSM2, LSM3, LSM6, LSM5, LSM7 and LSM4. Component of the spliceosome U4/U6-U5 tri-snRNP complex composed of the U4, U6 and U5 snRNAs and at least PRP3, PRP4, PRP6, PRP8, PRP18, PRP31, PRP38, SNU13, SNU23, SNU66, SNU114, SPP381, SMB1, SMD1, SMD2, SMD3, SMX2, SMX3, LSM2, LSM3, LSM4, LSM5, LSM6, LSM7, LSM8, BRR2 and DIB1. May be found in a complex comprising LSM2-LSM7 without LSM1 or LSM8; the complex associates with pre-P RNA and snoRNA SNR5.

Its subcellular location is the nucleus. The protein resides in the nucleolus. It localises to the cytoplasm. Its function is as follows. Component of LSm protein complexes, which are involved in RNA processing and may function in a chaperone-like manner. Component of the cytoplasmic LSM1-LSM7 complex which is involved in mRNA degradation by activating the decapping step. Together with PAT1, the LSM1-LSM7 complex binds to osmotic stress-activated mRNAs to attenuate the osmotic stress response, probably by limiting ribosome access to the mRNA and consequently translation. Component of the nuclear LSM2-LSM8 complex, which is involved in spliceosome assembly. The LSM2-LSM8 complex plays a role in the biogenesis of the spliceosomal U4/U6-U5 tri-snRNP complex by accelerating PRP24-mediated annealing of U4/U6 di-snRNA. The LSM2-LSM8 complex binds U6 snRNA terminating with a non-cyclic 3' phosphate group. LSM2-LSM8 is probably also involved in degradation of nuclear pre-mRNA by targeting them for decapping. LSM2-LSM8 could be involved in processing of pre-tRNAs, pre-rRNAs and U3 snoRNA, although involvement may be indirect. In a complex that probably contains LSM2-LSM7, but not LSM1 or LSM8, associates with the precursor of the RNA component of RNase P (pre-P RNA) and may be involved in maturing pre-P RNA; the complex also associates with snoRNA SNR5. The protein is LSM complex subunit LSM3 (LSM3) of Saccharomyces cerevisiae (strain ATCC 204508 / S288c) (Baker's yeast).